The following is a 27-amino-acid chain: Cupiennin-3b (27 aa).

Glutamate 27 carries the post-translational modification Glutamic acid 1-amide.

In terms of tissue distribution, expressed by the venom gland.

The protein localises to the secreted. This is Cupiennin-3b from Cupiennius salei (American wandering spider).